The sequence spans 156 residues: Ribosomal RNA large subunit methyltransferase H (156 aa).

S-adenosyl-L-methionine contacts are provided by residues leucine 73, glycine 104, and leucine 123–leucine 128.

This sequence belongs to the RNA methyltransferase RlmH family. Homodimer.

It localises to the cytoplasm. It carries out the reaction pseudouridine(1915) in 23S rRNA + S-adenosyl-L-methionine = N(3)-methylpseudouridine(1915) in 23S rRNA + S-adenosyl-L-homocysteine + H(+). Functionally, specifically methylates the pseudouridine at position 1915 (m3Psi1915) in 23S rRNA. The sequence is that of Ribosomal RNA large subunit methyltransferase H from Psychromonas ingrahamii (strain DSM 17664 / CCUG 51855 / 37).